The sequence spans 104 residues: SOSS complex subunit C (104 aa).

An N-acetylalanine modification is found at A2. S50 carries the phosphoserine modification.

This sequence belongs to the SOSS-C family. As to quaternary structure, component of the SOSS complex, composed of SOSS-B (SOSS-B1/NABP2 or SOSS-B2/NABP1), SOSS-A/INTS3 and SOSS-C/INIP. SOSS complexes containing SOSS-B1/NABP2 are more abundant than complexes containing SOSS-B2/NABP1. Interacts with INTS3; the interaction is direct.

Its subcellular location is the nucleus. In terms of biological role, component of the SOSS complex, a multiprotein complex that functions downstream of the MRN complex to promote DNA repair and G2/M checkpoint. The SOSS complex associates with single-stranded DNA at DNA lesions and influences diverse endpoints in the cellular DNA damage response including cell-cycle checkpoint activation, recombinational repair and maintenance of genomic stability. Required for efficient homologous recombination-dependent repair of double-strand breaks (DSBs) and ATM-dependent signaling pathways. The polypeptide is SOSS complex subunit C (INIP) (Homo sapiens (Human)).